The following is a 212-amino-acid chain: Glycerol-3-phosphate acyltransferase (212 aa).

A run of 4 helical transmembrane segments spans residues 3-23 (ILLA…VVVS), 78-98 (DVAV…PVFF), 115-135 (AVHP…AFFF), and 155-177 (FLFG…LLVW).

Belongs to the PlsY family. In terms of assembly, probably interacts with PlsX.

It is found in the cell inner membrane. It carries out the reaction an acyl phosphate + sn-glycerol 3-phosphate = a 1-acyl-sn-glycero-3-phosphate + phosphate. It participates in lipid metabolism; phospholipid metabolism. Its function is as follows. Catalyzes the transfer of an acyl group from acyl-phosphate (acyl-PO(4)) to glycerol-3-phosphate (G3P) to form lysophosphatidic acid (LPA). This enzyme utilizes acyl-phosphate as fatty acyl donor, but not acyl-CoA or acyl-ACP. The protein is Glycerol-3-phosphate acyltransferase of Burkholderia ambifaria (strain ATCC BAA-244 / DSM 16087 / CCUG 44356 / LMG 19182 / AMMD) (Burkholderia cepacia (strain AMMD)).